The chain runs to 351 residues: Beta-1,4-xylosyltransferase IRX9 (351 aa).

At 1-16 (MGSLERSKKKAQVWKK) the chain is on the cytoplasmic side. Residues 17–36 (AVIHFSLCFVMGFFTGFAPA) form a helical; Signal-anchor for type II membrane protein membrane-spanning segment. Topologically, residues 37-351 (GKASFFSNFE…KFPTRTRLST (315 aa)) are lumenal. Residues N64 and N74 are each glycosylated (N-linked (GlcNAc...) asparagine). Positions 80–107 (SQSQAPAPAESREAEGETRSLSEKEDEN) are disordered. Residues 89-107 (ESREAEGETRSLSEKEDEN) show a composition bias toward basic and acidic residues. 2 N-linked (GlcNAc...) asparagine glycosylation sites follow: N271 and N287.

The protein belongs to the glycosyltransferase 43 family. In terms of tissue distribution, expressed in developing interfascicular fibers, primary and secondary xylem in stems and developing secondary xylem in roots.

The protein localises to the golgi apparatus membrane. The enzyme catalyses [(1-&gt;4)-beta-D-xylan](n) + UDP-alpha-D-xylose = [(1-&gt;4)-beta-D-xylan](n+1) + UDP + H(+). Involved in the synthesis of the hemicellulose glucuronoxylan, a major component of secondary cell walls. Xylan xylosyltransferase that acts cooperatively with IRX14 to achieve the successive addition of xylosyl residues during xylan backbone elongation. In Arabidopsis thaliana (Mouse-ear cress), this protein is Beta-1,4-xylosyltransferase IRX9.